Consider the following 399-residue polypeptide: Imidazolonepropionase (399 aa).

Positions 1–13 (MSETLYTGISQLA) are enriched in polar residues. The disordered stretch occupies residues 1 to 20 (MSETLYTGISQLATPRPGPQ). His-74 and His-76 together coordinate Fe(3+). Residues His-74 and His-76 each contribute to the Zn(2+) site. 3 residues coordinate 4-imidazolone-5-propanoate: Arg-83, Tyr-146, and His-176. Tyr-146 is an N-formimidoyl-L-glutamate binding site. His-238 contributes to the Fe(3+) binding site. His-238 provides a ligand contact to Zn(2+). Gln-241 contacts 4-imidazolone-5-propanoate. Position 312 (Asp-312) interacts with Fe(3+). Zn(2+) is bound at residue Asp-312. 2 residues coordinate N-formimidoyl-L-glutamate: Asn-314 and Gly-316. Ser-317 provides a ligand contact to 4-imidazolone-5-propanoate.

This sequence belongs to the metallo-dependent hydrolases superfamily. HutI family. The cofactor is Zn(2+). Fe(3+) serves as cofactor.

It is found in the cytoplasm. The enzyme catalyses 4-imidazolone-5-propanoate + H2O = N-formimidoyl-L-glutamate. The protein operates within amino-acid degradation; L-histidine degradation into L-glutamate; N-formimidoyl-L-glutamate from L-histidine: step 3/3. Its function is as follows. Catalyzes the hydrolytic cleavage of the carbon-nitrogen bond in imidazolone-5-propanoate to yield N-formimidoyl-L-glutamate. It is the third step in the universal histidine degradation pathway. The protein is Imidazolonepropionase of Deinococcus radiodurans (strain ATCC 13939 / DSM 20539 / JCM 16871 / CCUG 27074 / LMG 4051 / NBRC 15346 / NCIMB 9279 / VKM B-1422 / R1).